The sequence spans 70 residues: DNA-directed RNA polymerase subunit omega (70 aa).

The protein belongs to the RNA polymerase subunit omega family. The RNAP catalytic core consists of 2 alpha, 1 beta, 1 beta' and 1 omega subunit. When a sigma factor is associated with the core the holoenzyme is formed, which can initiate transcription.

It carries out the reaction RNA(n) + a ribonucleoside 5'-triphosphate = RNA(n+1) + diphosphate. Promotes RNA polymerase assembly. Latches the N- and C-terminal regions of the beta' subunit thereby facilitating its interaction with the beta and alpha subunits. The protein is DNA-directed RNA polymerase subunit omega of Staphylococcus epidermidis (strain ATCC 35984 / DSM 28319 / BCRC 17069 / CCUG 31568 / BM 3577 / RP62A).